The following is a 289-amino-acid chain: Protoheme IX farnesyltransferase 2 (289 aa).

The next 9 membrane-spanning stretches (helical) occupy residues 1-21 (MIKP…FLLA), 28-48 (LTLM…GCGL), 76-96 (YSVL…LAIF), 100-120 (IALL…SLYM), 125-145 (VYGT…GYCA), 155-175 (VILL…IAIF), 199-219 (LHIV…PLAG), 221-241 (TGIA…GMAL), and 260-280 (CSIV…QLVV).

This sequence belongs to the UbiA prenyltransferase family. Protoheme IX farnesyltransferase subfamily.

The protein localises to the cell inner membrane. It carries out the reaction heme b + (2E,6E)-farnesyl diphosphate + H2O = Fe(II)-heme o + diphosphate. It functions in the pathway porphyrin-containing compound metabolism; heme O biosynthesis; heme O from protoheme: step 1/1. In terms of biological role, converts heme B (protoheme IX) to heme O by substitution of the vinyl group on carbon 2 of heme B porphyrin ring with a hydroxyethyl farnesyl side group. The sequence is that of Protoheme IX farnesyltransferase 2 from Shewanella woodyi (strain ATCC 51908 / MS32).